We begin with the raw amino-acid sequence, 403 residues long: Phosphopentomutase (403 aa).

Mn(2+) contacts are provided by Asp-13, Asp-298, His-303, Asp-339, His-340, and His-351.

The protein belongs to the phosphopentomutase family. Mn(2+) is required as a cofactor.

The protein resides in the cytoplasm. It catalyses the reaction 2-deoxy-alpha-D-ribose 1-phosphate = 2-deoxy-D-ribose 5-phosphate. It carries out the reaction alpha-D-ribose 1-phosphate = D-ribose 5-phosphate. It functions in the pathway carbohydrate degradation; 2-deoxy-D-ribose 1-phosphate degradation; D-glyceraldehyde 3-phosphate and acetaldehyde from 2-deoxy-alpha-D-ribose 1-phosphate: step 1/2. Functionally, isomerase that catalyzes the conversion of deoxy-ribose 1-phosphate (dRib-1-P) and ribose 1-phosphate (Rib-1-P) to deoxy-ribose 5-phosphate (dRib-5-P) and ribose 5-phosphate (Rib-5-P), respectively. This chain is Phosphopentomutase, found in Streptococcus pyogenes serotype M2 (strain MGAS10270).